Here is a 270-residue protein sequence, read N- to C-terminus: Tubulin-specific chaperone B (270 aa).

The CAP-Gly domain maps to 214 to 256; that stretch reads GTVEFSSGVWIGVELDLPLGKNDGSVKGKQYFQCSPKYGCFAK.

The protein belongs to the TBCB family. Supercomplex made of cofactors A to E. Cofactors A and D function by capturing and stabilizing tubulin in a quasi-native conformation. Cofactor E binds to the cofactor D-tubulin complex; interaction with cofactor C then causes the release of tubulin polypeptides that are committed to the native state.

The protein resides in the cytoplasm. The protein localises to the cytoskeleton. In terms of biological role, binds to alpha-tubulin folding intermediates after their interaction with cytosolic chaperonin in the pathway leading from newly synthesized tubulin to properly folded heterodimer. The protein is Tubulin-specific chaperone B (tbcb) of Dictyostelium discoideum (Social amoeba).